A 455-amino-acid polypeptide reads, in one-letter code: Golgi pH regulator (455 aa).

Transmembrane regions (helical) follow at residues 5–25 (IDSS…WLFF), 46–66 (VTFA…LGVL), 79–99 (LCVI…YFIV), 114–134 (CLLW…FPIL), and 150–170 (VGVI…VNCP). Asn-180 and Asn-243 each carry an N-linked (GlcNAc...) asparagine glycan. A run of 4 helical transmembrane segments spans residues 290 to 310 (GYFF…NIVF), 343 to 363 (ISFI…LITL), 378 to 398 (VIVL…VLLI), and 425 to 445 (WFDV…YLAH).

Belongs to the Golgi pH regulator (TC 1.A.38) family. As to quaternary structure, homotrimer. Interacts with RABL3; the interaction stabilizes GPR89A.

The protein localises to the golgi apparatus membrane. The enzyme catalyses iodide(out) = iodide(in). The catalysed reaction is chloride(in) = chloride(out). It catalyses the reaction bromide(in) = bromide(out). It carries out the reaction fluoride(in) = fluoride(out). Functionally, voltage-gated channel that enables the transfer of monoatomic anions such as iodide, chloride, bromide and fluoride which may function in counter-ion conductance and participates in Golgi acidification. Plays a role in lymphocyte development, probably by acting as a RABL3 effector in hematopoietic cells. This chain is Golgi pH regulator, found in Bos taurus (Bovine).